Consider the following 956-residue polypeptide: Glutamate receptor ionotropic, kainate 4 (956 aa).

A signal peptide spans 1–20 (MPRVSAPLVLLPAWLLMVAC). Residues 21–545 (SPHSLRIAAI…YFSSLDPFSP (525 aa)) are Extracellular-facing. N-linked (GlcNAc...) asparagine glycans are attached at residues Asn158, Asn220, Asn272, Asn286, Asn323, Asn408, Asn415, and Asn479. Positions 500, 502, and 507 each coordinate L-glutamate. The chain crosses the membrane as a helical span at residues 546–566 (GVWLFMLLAYLAVSCVLFLVA). Residues 567–623 (RLTPYEWYSPHPCAQGRCNLLVNQYSLGNSLWFPVGGFMQQGSTIAPRALSTRCVSG) are Cytoplasmic-facing. The helical transmembrane segment at 624 to 644 (VWWAFTLIIISSYTANLAAFL) threads the bilayer. Topologically, residues 645–804 (TVQRMEVPIE…HRAKGLGMEN (160 aa)) are extracellular. L-glutamate contacts are provided by Ser674, Ser675, and Glu723. Asn736 is a glycosylation site (N-linked (GlcNAc...) asparagine). Residues 805–825 (IGGIFVVLICGLIVAIFMAML) traverse the membrane as a helical segment. The Cytoplasmic segment spans residues 826–956 (EFLWTLRHSE…DKTTNSSEPE (131 aa)). A disordered region spans residues 931 to 956 (LRARPSPARSEESLEWDKTTNSSEPE). Residues 939-948 (RSEESLEWDK) are compositionally biased toward basic and acidic residues.

This sequence belongs to the glutamate-gated ion channel (TC 1.A.10.1) family. GRIK4 subfamily. As to quaternary structure, homodimer. Can form functional heteromeric receptors with GRIK1, GRIK2 and GRIK3. In terms of tissue distribution, strong expression in hippocampal CA3 pyramidal cells. Low expression in hippocampal dentate granule cells, in layers II, V and VI of the cortex, and in cerebellar Purkinje cells. No expression in the striatum, reticular thalamus, hypothalamus or amygdaloid complex.

The protein localises to the cell membrane. Its subcellular location is the postsynaptic cell membrane. It localises to the presynaptic cell membrane. In terms of biological role, ionotropic glutamate receptor that functions as a cation-permeable ligand-gated ion channel, gated by L-glutamate and the glutamatergic agonist kainic acid. Cannot form functional channels on its own and shows channel activity only in heteromeric assembly with GRIK1, GRIK2 and GRIK3 subunits. In Rattus norvegicus (Rat), this protein is Glutamate receptor ionotropic, kainate 4 (Grik4).